The chain runs to 737 residues: Palmitoyltransferase akr1 (737 aa).

Low complexity predominate over residues 1-15 (MSSGNSSTGTHTNGN). Residues 1-39 (MSSGNSSTGTHTNGNFATLGSSPPSAVGGKGRAIPPKVT) are disordered. The Cytoplasmic portion of the chain corresponds to 1 to 313 (MSSGNSSTGT…WVRNKSLMSK (313 aa)). ANK repeat units lie at residues 96–125 (EGITPLHWAAINNQYAMCKFLLDSGADVNA), 130–159 (SVATPAMWAAQRCHYYIVHLLLQRGADPLL), 163–192 (QGYNILHLATIDGNAFLLVLLLHQEIPVDV), 196–225 (QGHTGLMWAAYKGYPALVDLFLRWGAHANA), and 228–258 (EGGLTPLHWALVKGSLPCVLKLIEYGADKFA). A run of 2 helical transmembrane segments spans residues 314 to 334 (FFFLWPFAIVFAAVWILSNMV) and 335 to 355 (VYAAIPMMLVTVFGLQWVAQK). The Cytoplasmic segment spans residues 356 to 374 (AASQGPSEYRILQKTPYLS). A helical transmembrane segment spans residues 375 to 395 (GVFAGSLFWVGFRYVFYVLPV). Topologically, residues 396 to 401 (TYSTSP) are lumenal. Residues 402–422 (ILNGLFAIFFSLTTYFYIYSM) form a helical membrane-spanning segment. The Cytoplasmic portion of the chain corresponds to 423–498 (VEDPGFVPKL…DNCVGANNLR (76 aa)). Residues 455-505 (NFCVSCMVRRPLRSKHCKRCARCVAKHDHHCPWIDNCVGANNLRHFVLYIT) enclose the DHHC domain. The S-palmitoyl cysteine intermediate role is filled by Cys-485. A helical membrane pass occupies residues 499–519 (HFVLYITCLEVGIVLFVQLTF). Residues 520-548 (NYINSLPAPAQPQCNIINETLCDFVLRDT) lie on the Lumenal side of the membrane. A helical membrane pass occupies residues 549 to 569 (FTLVLDLWVCIQLVWITMLVA). Topologically, residues 570-737 (VQMIQISRNQ…LSVEDPEQGV (168 aa)) are cytoplasmic.

Belongs to the DHHC palmitoyltransferase family. AKR/ZDHHC17 subfamily.

It localises to the early endosome membrane. Its subcellular location is the golgi apparatus membrane. The enzyme catalyses L-cysteinyl-[protein] + hexadecanoyl-CoA = S-hexadecanoyl-L-cysteinyl-[protein] + CoA. Its function is as follows. Palmitoyltransferase specific for casein kinase 1. The protein is Palmitoyltransferase akr1 (akr1) of Aspergillus oryzae (strain ATCC 42149 / RIB 40) (Yellow koji mold).